We begin with the raw amino-acid sequence, 231 residues long: Protein OPG061 (231 aa).

It belongs to the orthopoxvirus OPG058 family.

It is found in the host nucleus. The protein localises to the host nucleolus. This chain is Protein OPG061 (OPG061), found in Homo sapiens (Human).